Reading from the N-terminus, the 468-residue chain is Glutamate--tRNA ligase (468 aa).

The short motif at 10 to 20 (PSPTGYLHIGG) is the 'HIGH' region element. A 'KMSKS' region motif is present at residues 252–256 (KLSKR). Lys-255 contributes to the ATP binding site.

It belongs to the class-I aminoacyl-tRNA synthetase family. Glutamate--tRNA ligase type 1 subfamily. Monomer.

It localises to the cytoplasm. It catalyses the reaction tRNA(Glu) + L-glutamate + ATP = L-glutamyl-tRNA(Glu) + AMP + diphosphate. Catalyzes the attachment of glutamate to tRNA(Glu) in a two-step reaction: glutamate is first activated by ATP to form Glu-AMP and then transferred to the acceptor end of tRNA(Glu). This chain is Glutamate--tRNA ligase, found in Mycoplasmopsis pulmonis (strain UAB CTIP) (Mycoplasma pulmonis).